Reading from the N-terminus, the 267-residue chain is N-formylglutamate deformylase (267 aa).

The protein belongs to the N-formylglutamate deformylase family. Monomer.

The catalysed reaction is N-formyl-L-glutamate + H2O = formate + L-glutamate. The protein operates within amino-acid degradation; L-histidine degradation into L-glutamate; L-glutamate from N-formimidoyl-L-glutamate (deiminase route): step 2/2. Stimulated by Co(2+). Fe(2+) is also a good activator, particularly at lower concentrations, but it inhibits slightly the activity when used at concentrations over 0.1 mM. Other divalent metals tested (Cd(2+), Ca(2+), Mn(2+), Zn(2+), Ni(2+) and Mg(2+)) are not effective activators. Functionally, catalyzes the hydrolysis of N-formyl-L-glutamate to formate and L-glutamate. The sequence is that of N-formylglutamate deformylase from Pseudomonas putida (Arthrobacter siderocapsulatus).